The sequence spans 293 residues: Movement protein BC1 (293 aa).

This sequence belongs to the begomovirus movement protein BC1 family. Binds to dimeric supercoiled plasmid DNA. In terms of processing, phosphorylated.

Its subcellular location is the host cell membrane. The protein localises to the host microsome membrane. The protein resides in the host endoplasmic reticulum membrane. Its function is as follows. Transports viral genome to neighboring plant cells directly through plasmosdesmata, without any budding. The movement protein allows efficient cell to cell propagation, by bypassing the host cell wall barrier. Begomovirus genome is shuttled out of nucleus by Nuclear shuttle protein (NSP) and the movement protein transports the DNA-NSP complex to cell plasmodesmata and facilitates further movement across the cell wall. The chain is Movement protein BC1 from Macroptilium lathyroides (Lima bean).